The sequence spans 445 residues: Crotonyl-CoA reductase (445 aa).

Zn(2+) is bound at residue Glu149.

This sequence belongs to the zinc-containing alcohol dehydrogenase family. Crotonyl-CoA carboxylase/reductase subfamily. Homodimer. The cofactor is Zn(2+).

The enzyme catalyses butanoyl-CoA + NADP(+) = (2E)-butenoyl-CoA + NADPH + H(+). With respect to regulation, inhibited by NADPH at concentrations above 200 uM, by MgCl (30%), by ZnCl(2) (55%), and by CoCl, MnCl and CaCl (100%). Also inhibited by iodoacetamide, N-ethylmaleamide, the thiol group inhibitor beta-chloromercuribenzoate, palmitoyl-CoA and myristoyl-CoA. In terms of biological role, catalyzes the conversion of crotonyl-CoA to butyryl-CoA. It uses only NADP as electron donor. May have a role in providing butyryl-CoA as a starter unit for straight-chain fatty acid biosynthesis. The polypeptide is Crotonyl-CoA reductase (ccrA2) (Streptomyces avermitilis (strain ATCC 31267 / DSM 46492 / JCM 5070 / NBRC 14893 / NCIMB 12804 / NRRL 8165 / MA-4680)).